We begin with the raw amino-acid sequence, 128 residues long: Large ribosomal subunit protein uL22 (128 aa).

It belongs to the universal ribosomal protein uL22 family. As to quaternary structure, part of the 50S ribosomal subunit.

Functionally, this protein binds specifically to 23S rRNA; its binding is stimulated by other ribosomal proteins, e.g. L4, L17, and L20. It is important during the early stages of 50S assembly. It makes multiple contacts with different domains of the 23S rRNA in the assembled 50S subunit and ribosome. The globular domain of the protein is located near the polypeptide exit tunnel on the outside of the subunit, while an extended beta-hairpin is found that lines the wall of the exit tunnel in the center of the 70S ribosome. The polypeptide is Large ribosomal subunit protein uL22 (Prochlorococcus marinus (strain MIT 9312)).